We begin with the raw amino-acid sequence, 842 residues long: Protein P (842 aa).

The interval 1–177 is terminal protein domain (TP); sequence MPLSYQHFRK…FCGSPYSWEQ (177 aa). Residues 178–346 form a spacer region; it reads ELQHGRLVFQ…YCLTHIVNLL (169 aa). Residues 218–274 form a disordered region; sequence LKQSRLGLQPQQGSLARGKSGRSGSIRARVPPTTRRSFGVEPSGSGHIDNRASSTSS. Residues 347–690 are polymerase/reverse transcriptase domain (RT); it reads EDWGPCTEHG…YLHLYPVARR (344 aa). The 244-residue stretch at 357–600 folds into the Reverse transcriptase domain; that stretch reads EHNIRIPRTP…YSLNFMGYVI (244 aa). Mg(2+) is bound by residues D429, D551, and D552.

The protein belongs to the hepadnaviridae P protein family.

It carries out the reaction DNA(n) + a 2'-deoxyribonucleoside 5'-triphosphate = DNA(n+1) + diphosphate. It catalyses the reaction Endonucleolytic cleavage to 5'-phosphomonoester.. With respect to regulation, activated by host HSP70 and HSP40 in vitro to be able to bind the epsilon loop of the pgRNA. Because deletion of the RNase H region renders the protein partly chaperone-independent, the chaperones may be needed indirectly to relieve occlusion of the RNA-binding site by this domain. Inhibited by several reverse-transcriptase inhibitors: Lamivudine, Adefovir and Entecavir. Its function is as follows. Multifunctional enzyme that converts the viral RNA genome into dsDNA in viral cytoplasmic capsids. This enzyme displays a DNA polymerase activity that can copy either DNA or RNA templates, and a ribonuclease H (RNase H) activity that cleaves the RNA strand of RNA-DNA heteroduplexes in a partially processive 3'- to 5'-endonucleasic mode. Neo-synthesized pregenomic RNA (pgRNA) are encapsidated together with the P protein, and reverse-transcribed inside the nucleocapsid. Initiation of reverse-transcription occurs first by binding the epsilon loop on the pgRNA genome, and is initiated by protein priming, thereby the 5'-end of (-)DNA is covalently linked to P protein. Partial (+)DNA is synthesized from the (-)DNA template and generates the relaxed circular DNA (RC-DNA) genome. After budding and infection, the RC-DNA migrates in the nucleus, and is converted into a plasmid-like covalently closed circular DNA (cccDNA). The activity of P protein does not seem to be necessary for cccDNA generation, and is presumably released from (+)DNA by host nuclear DNA repair machinery. The protein is Protein P of Hepatitis B virus genotype C subtype adr (isolate Korea/Kim/1989) (HBV-C).